The following is a 445-amino-acid chain: Glucose-6-phosphate isomerase 2 (445 aa).

The Proton donor role is filled by glutamate 285. Residues histidine 306 and lysine 420 contribute to the active site.

Belongs to the GPI family. In terms of assembly, homodimer.

It is found in the cytoplasm. The enzyme catalyses alpha-D-glucose 6-phosphate = beta-D-fructose 6-phosphate. It participates in carbohydrate biosynthesis; gluconeogenesis. Its pathway is carbohydrate degradation; glycolysis; D-glyceraldehyde 3-phosphate and glycerone phosphate from D-glucose: step 2/4. Catalyzes the reversible isomerization of glucose-6-phosphate to fructose-6-phosphate. The chain is Glucose-6-phosphate isomerase 2 from Geobacillus stearothermophilus (Bacillus stearothermophilus).